The following is an 84-amino-acid chain: Large ribosomal subunit protein bL27 (84 aa).

Residues 1–21 (MAHKKGASSTRNGRDSNAQRL) are disordered. A compositionally biased stretch (polar residues) spans 7 to 19 (ASSTRNGRDSNAQ).

The protein belongs to the bacterial ribosomal protein bL27 family.

This is Large ribosomal subunit protein bL27 from Clavibacter michiganensis subsp. michiganensis (strain NCPPB 382).